Here is a 381-residue protein sequence, read N- to C-terminus: Cytochrome b (381 aa).

The next 4 helical transmembrane spans lie at phenylalanine 34–methionine 54, tryptophan 78–isoleucine 99, tryptophan 114–leucine 134, and phenylalanine 179–leucine 199. Heme b-binding residues include histidine 84 and histidine 98. Residues histidine 183 and histidine 197 each coordinate heme b. Histidine 202 serves as a coordination point for a ubiquinone. The next 4 helical transmembrane spans lie at tyrosine 227 to methionine 247, leucine 289 to histidine 309, leucine 321 to glycine 341, and phenylalanine 348 to proline 368.

This sequence belongs to the cytochrome b family. The cytochrome bc1 complex contains 3 respiratory subunits (MT-CYB, CYC1 and UQCRFS1), 2 core proteins (UQCRC1 and UQCRC2) and probably 6 low-molecular weight proteins. Requires heme b as cofactor.

The protein localises to the mitochondrion inner membrane. Its function is as follows. Component of the ubiquinol-cytochrome c reductase complex (complex III or cytochrome b-c1 complex) that is part of the mitochondrial respiratory chain. The b-c1 complex mediates electron transfer from ubiquinol to cytochrome c. Contributes to the generation of a proton gradient across the mitochondrial membrane that is then used for ATP synthesis. This Scyliorhinus canicula (Small-spotted catshark) protein is Cytochrome b (mt-cyb).